The sequence spans 106 residues: uncharacterized protein (106 aa).

A disordered region spans residues 54–106 (RSTLVATSPRRRSLVQQRRPPLREQNGGSGSSCVSSGGSASTVKTPGSRRASK). The segment covering 84–94 (SSCVSSGGSAS) has biased composition (low complexity).

This is an uncharacterized protein from Human adenovirus C serotype 2 (HAdV-2).